Here is a 370-residue protein sequence, read N- to C-terminus: Vasopressin V2 receptor (370 aa).

Positions 1 to 28 (MLRATTSAVPRALSWPAAPGNGSEREPL) are disordered. Residues 1–37 (MLRATTSAVPRALSWPAAPGNGSEREPLDDRDPLLAR) lie on the Extracellular side of the membrane. The N-linked (GlcNAc...) asparagine glycan is linked to asparagine 21. Residues 38–62 (VELALLSTVFVAVALSNGLVLGALV) form a helical membrane-spanning segment. The Cytoplasmic portion of the chain corresponds to 63 to 76 (RRGRRGRWAPMHVF). A helical transmembrane segment spans residues 77–97 (IGHLCLADLAVALFQVLPQLA). Topologically, residues 98–112 (WDATYRFRGPDALCR) are extracellular. A helical transmembrane segment spans residues 113–134 (AVKYLQMVGMYASSYMILAMTL). The Cytoplasmic portion of the chain corresponds to 135–158 (DRHRAICRPMLAYRHGGGARWNRP). Residues 159–179 (VLVAWAFSLLLSLPQLFIFAQ) form a helical membrane-spanning segment. At 180 to 199 (RDVGDGSGVLDCWASFAEPW) the chain is on the extracellular side. The chain crosses the membrane as a helical span at residues 200–219 (GLRAYVTWIALMVFVAPALG). The Cytoplasmic segment spans residues 220–270 (IAACQVLIFREIHTSLVPGPAERAGGHRGGRRAGSPREGARVSAAMAKTAR). A helical membrane pass occupies residues 271–292 (MTLVIVAVYVLCWAPFFLVQLW). The Extracellular segment spans residues 293–307 (SVWDPKAPREGPPFV). The chain crosses the membrane as a helical span at residues 308–327 (LLMLLASLNSCTNPWIYASF). At 328–370 (SSSISSELRSLLCCPRRRTPPSLRPQEESCATASSFSARDTSS) the chain is on the cytoplasmic side. 2 S-palmitoyl cysteine lipidation sites follow: cysteine 340 and cysteine 341. Residues 347–370 (PPSLRPQEESCATASSFSARDTSS) form a disordered region. Residues 356–370 (SCATASSFSARDTSS) are compositionally biased toward polar residues.

This sequence belongs to the G-protein coupled receptor 1 family. Vasopressin/oxytocin receptor subfamily. As to quaternary structure, interacts with ARRDC4. Identified in a complex containing at least ARRDC4, V2R and HGS. Interacts with TMEM147.

It is found in the cell membrane. Functionally, receptor for arginine vasopressin. The activity of this receptor is mediated by G proteins which activate adenylate cyclase. Involved in renal water reabsorption. This chain is Vasopressin V2 receptor (AVPR2), found in Sus scrofa (Pig).